The sequence spans 601 residues: MFVAKNLSPERESKRQKKEPEIMEPSFPLLSPNNCGHWYIRYGFCIVCKSTVDKTIEGRVFDGLHLSSEALALTKRLITKFSCLNMKKLHLVLDLDLTLIHSVRVPCLSEAEKYLIEEAGSTTREDLWKMKVRGDPISITIEHLVKLRPFLCEFLKEANEMFTMYVYTKGTRPYAEAILKLIDPKKLYFGHRVITRNESPHTKTLDMVLADERGVVIVDDTRKAWPNNKSNLVLIGRYNYFRSQSRVLKPHSEEKTDESENNGGLANVLKLLKGIHHKFFKVEEEVESQDVRLTMSVVENFSSEPKAKRRKIEPTINESSSSLSSSSSCGHWYICHGICIGCKSTVKKSQGRAFDYIFDGLQLSHEAVALTKCFTTKLSCLNEKKLHLVLDLDHTLLHTVMVPSLSQAEKYLIEEAGSATRDDLWKIKAVGDPMEFLTKLRPFLRDFLKEANEFFTMYVYTKGSRVYAKQVLELIDPKKLYFGDRVITKTESPHMKTLDFVLAEERGVVIVDDTRNVWPDHKSNLVDISKYSYFRLKGQDSMPYSEEKTDESESEGGLANVLKLLKEVHQRFFRVEEELESKDVRSLLQEIDFELNVESVE.

The disordered stretch occupies residues 1–20 (MFVAKNLSPERESKRQKKEP). Over residues 8-20 (SPERESKRQKKEP) the composition is skewed to basic and acidic residues. FCP1 homology domains follow at residues 84–259 (LNMK…TDES) and 381–553 (LNEK…DESE).

As to expression, expressed in roots, seedlings, hypocotyls, cotyledons, leaves, siliques and flowers.

It localises to the nucleus. The catalysed reaction is O-phospho-L-seryl-[protein] + H2O = L-seryl-[protein] + phosphate. The enzyme catalyses O-phospho-L-threonyl-[protein] + H2O = L-threonyl-[protein] + phosphate. Functionally, mediates the dephosphorylation of 'Ser-2' of the heptad repeats YSPTSPS in the C-terminal domain of the largest RNA polymerase II subunit (RPB1). This promotes the activity of RNA polymerase II. Positively regulates abscisic acid (ABA) and drought responses, including the regulation of specific genes expression. In Arabidopsis thaliana (Mouse-ear cress), this protein is RNA polymerase II C-terminal domain phosphatase-like 5.